Consider the following 199-residue polypeptide: MHFLVGISTENYVILAADKATFAYGAILADSENDKEYRLGKKLTMMCIGEEGDVAQFGDWTKRNLQLYSVRNGYEVSPSCAHHFVRRSIAEGLRSQDHYTVDVLIGGYDDKEDKAFLGSVDYLANGLGQQPYLFRGFCGRFCYAIMDREYKKDMTEAEGLALMNKCIGEAKRRFVANIPGYKVVIIDKKGYRKLDDVLF.

Belongs to the peptidase T1B family. As to quaternary structure, the 26S proteasome consists of a 20S proteasome core and two 19S regulatory subunits. The 20S proteasome core is composed of 28 subunits that are arranged in four stacked rings, resulting in a barrel-shaped structure. The two end rings are each formed by seven alpha subunits, and the two central rings are each formed by seven beta subunits. The catalytic chamber with the active sites is on the inside of the barrel.

It localises to the cytoplasm. Its subcellular location is the nucleus. Functionally, non-catalytic component of the proteasome, a multicatalytic proteinase complex which is characterized by its ability to cleave peptides with Arg, Phe, Tyr, Leu, and Glu adjacent to the leaving group at neutral or slightly basic pH. The proteasome has an ATP-dependent proteolytic activity. In Caenorhabditis elegans, this protein is Proteasome subunit beta type-2 (pbs-4).